The chain runs to 80 residues: Probable antimicrobial peptide clone Con10 (80 aa).

A signal peptide spans 1–24 (MQYKTKTFLVIFLAYLVVTNEAEA). Positions 56-80 (EIEDFFDPYQRELDLELERLLSQLQ) are excised as a propeptide.

Belongs to the non-disulfide-bridged peptide (NDBP) superfamily. Medium-length antimicrobial peptide (group 3) family. In terms of tissue distribution, expressed by the venom gland.

The protein localises to the secreted. The protein resides in the target cell membrane. Its function is as follows. Antimicrobial peptide. Has antifungal activity against all strains tested (MIC=12.5-200 uM). May act by disrupting the integrity of the bacterial cell membrane. In Opisthacanthus cayaporum (South American scorpion), this protein is Probable antimicrobial peptide clone Con10.